The following is a 696-amino-acid chain: Golgi integral membrane protein 4 (696 aa).

Gly2 carries N-myristoyl glycine lipidation. Over 2–12 (GNGMCSRKQKR) the chain is Cytoplasmic. A helical; Signal-anchor for type II membrane protein transmembrane segment spans residues 13 to 33 (IFQTLLLLTVVFGFLYGAMLY). Topologically, residues 34 to 696 (YELQTQLRKA…AEKSHRRAEM (663 aa)) are lumenal. A coiled-coil region spans residues 35 to 244 (ELQTQLRKAE…KQLKDTLNRI (210 aa)). The segment at 38-107 (TQLRKAEAVA…ETLNKGRQDS (70 aa)) is golgi targeting. An endosome targeting region spans residues 80-175 (LEHKKAKEDF…QELSKLKETV (96 aa)). Disordered regions lie at residues 122 to 145 (KSQHEELKKQHSDLEEEHRKQGED), 244 to 391 (IPSL…HARA), and 427 to 696 (LREH…RAEM). The segment covering 123-145 (SQHEELKKQHSDLEEEHRKQGED) has biased composition (basic and acidic residues). The segment at 176–248 (YNLREENRQL…DTLNRIPSLR (73 aa)) is golgi targeting. The span at 254–269 (EQQNVTQVAHSPQGYN) shows a compositional bias: polar residues. An N-linked (GlcNAc...) asparagine glycan is attached at Asn257. 5 stretches are compositionally biased toward basic and acidic residues: residues 271–281 (AREKPTREVQE), 298–313 (RAEDTKLYAPTHKEAE), 324–343 (EVERREPEEHQVEEEHRKAL), 355–364 (EHLEEEHDPS), and 370–380 (REWKEQHEQRE). At Ser364 the chain carries Phosphoserine. The segment covering 436-453 (QQRLQGHLLRQQEQQQQQ) has biased composition (low complexity). Composition is skewed to basic and acidic residues over residues 464-476 (AELEEGRPQHQEQ) and 505-545 (AYER…RAAV). Ser538 is subject to Phosphoserine. Positions 604–626 (QQEDNVDEQYQEEAEEEVQEDLT) are enriched in acidic residues. Position 613 is a phosphotyrosine (Tyr613). Residue Thr626 is modified to Phosphothreonine. 2 stretches are compositionally biased toward basic and acidic residues: residues 627–638 (EEKKRELEHNAE) and 661–672 (RDDNRPKGREEH). Phosphotyrosine is present on Tyr673. Residues 673–683 (YEEEEEEEEDG) show a composition bias toward acidic residues.

It belongs to the GOLIM4 family. In terms of processing, phosphorylated probably by c-AMP-dependent kinases in its lumenal part. O-glycosylated; modified by sialic acid residues. Post-translationally, N-glycosylated; N-glycans are probably of the complex type and modified by sialic acid residues.

The protein resides in the golgi apparatus. Its subcellular location is the golgi stack membrane. The protein localises to the endosome membrane. It is found in the membrane. In terms of biological role, plays a role in endosome to Golgi protein trafficking; mediates protein transport along the late endosome-bypass pathway from the early endosome to the Golgi. This chain is Golgi integral membrane protein 4 (GOLIM4), found in Homo sapiens (Human).